Consider the following 799-residue polypeptide: Phenylalanine--tRNA ligase beta subunit (799 aa).

One can recognise a tRNA-binding domain in the interval 39–150 (GKGFSGVIVG…EHLQAGTALN (112 aa)). The B5 domain occupies 402–478 (FLELTIRCRL…RIYGYDHIPR (77 aa)). Positions 456, 462, 465, and 466 each coordinate Mg(2+). In terms of domain architecture, FDX-ACB spans 705–798 (AIYPGSERDW…VSQKFANDLK (94 aa)).

Belongs to the phenylalanyl-tRNA synthetase beta subunit family. Type 1 subfamily. Tetramer of two alpha and two beta subunits. Mg(2+) is required as a cofactor.

The protein resides in the cytoplasm. The enzyme catalyses tRNA(Phe) + L-phenylalanine + ATP = L-phenylalanyl-tRNA(Phe) + AMP + diphosphate + H(+). In Protochlamydia amoebophila (strain UWE25), this protein is Phenylalanine--tRNA ligase beta subunit.